A 287-amino-acid polypeptide reads, in one-letter code: Urease accessory protein UreD (287 aa).

Belongs to the UreD family. UreD, UreF and UreG form a complex that acts as a GTP-hydrolysis-dependent molecular chaperone, activating the urease apoprotein by helping to assemble the nickel containing metallocenter of UreC. The UreE protein probably delivers the nickel.

The protein resides in the cytoplasm. Its function is as follows. Required for maturation of urease via the functional incorporation of the urease nickel metallocenter. The chain is Urease accessory protein UreD from Herpetosiphon aurantiacus (strain ATCC 23779 / DSM 785 / 114-95).